The primary structure comprises 432 residues: Neuropeptide FF receptor 1 (432 aa).

At 1-43 (MEAEPSQPPNGSWPLGQNGSDVETSMATSLTFSSYYQHSSPVA) the chain is on the extracellular side. Residues N10 and N18 are each glycosylated (N-linked (GlcNAc...) asparagine). Residues 44-64 (AMFIAAYVLIFLLCMVGNTLV) form a helical membrane-spanning segment. Residues 65-80 (CFIVLKNRHMRTVTNM) lie on the Cytoplasmic side of the membrane. The helical transmembrane segment at 81–101 (FILNLAVSDLLVGIFCMPTTL) threads the bilayer. At 102 to 117 (VDNLITGWPFDNATCK) the chain is on the extracellular side. A glycan (N-linked (GlcNAc...) asparagine) is linked at N113. A disulfide bridge connects residues C116 and C203. Residues 118 to 138 (MSGLVQGMSVSASVFTLVAIA) form a helical membrane-spanning segment. The Cytoplasmic portion of the chain corresponds to 139–158 (VERFRCIVHPFREKLTLRKA). A helical membrane pass occupies residues 159 to 179 (LFTIAVIWALALLIMCPSAVT). The Extracellular segment spans residues 180-214 (LTVTREEHHFMLDARNRSYPLYSCWEAWPEKGMRK). N-linked (GlcNAc...) asparagine glycosylation occurs at N195. Residues 215–235 (VYTAVLFAHIYLVPLALIVVM) form a helical membrane-spanning segment. Residues 236–273 (YVRIARKLCQAPGPARDTEEAVAEGGRTSRRRARVVHM) lie on the Cytoplasmic side of the membrane. A helical membrane pass occupies residues 274–294 (LVMVALFFTLSWLPLWVLLLL). Over 295–309 (IDYGELSELQLHLLS) the chain is Extracellular. Residues 310 to 330 (VYAFPLAHWLAFFHSSANPII) form a helical membrane-spanning segment. Residues 331–432 (YGYFNENFRR…MPLTIPAWNI (102 aa)) are Cytoplasmic-facing. A compositionally biased stretch (low complexity) spans 380 to 406 (PSDSGLPSESGPSSGVPGPGRLPLRNG). The tract at residues 380–422 (PSDSGLPSESGPSSGVPGPGRLPLRNGRVAHQDGPGEGPGCNH) is disordered.

This sequence belongs to the G-protein coupled receptor 1 family. In terms of tissue distribution, expressed at high levels in the hypothalamus. Moderate levels found in the midbrain, thalamus, medulla oblongata, testis, eye, whole brain, cerebral cortex, striatum, hippocampus, cerebellum, optic nerve, placenta, spinal cord, pituitary gland and ovary.

It is found in the cell membrane. Functionally, receptor for NPAF (A-18-F-amide) and NPFF (F-8-F-amide) neuropeptides, also known as morphine-modulating peptides. Can also be activated by a variety of naturally occurring or synthetic FMRF-amide like ligands. This receptor mediates its action by association with G proteins that activate a phosphatidylinositol-calcium second messenger system. In Rattus norvegicus (Rat), this protein is Neuropeptide FF receptor 1 (Npffr1).